A 470-amino-acid chain; its full sequence is Flavin-containing monooxygenase FMO GS-OX-like 6 (470 aa).

17-22 (GAGAAG) contacts FAD. 214-219 (GYQSSG) lines the NADP(+) pocket.

Belongs to the FMO family. FAD is required as a cofactor.

Catalyzes the conversion of methylthioalkyl glucosinolates of any chain length into methylsulfinylalkyl glucosinolates. This Arabidopsis thaliana (Mouse-ear cress) protein is Flavin-containing monooxygenase FMO GS-OX-like 6.